The chain runs to 466 residues: MSTEKDYVVADIGLADFGRKEITIAETEMPGLMSCRAEFGEAKPLKGARITGSLHMTIQTAVLIETLVALGAEVRWASCNIFSTQDHAAAAIAAAGVPVFAIKGESLEDYWVYTDKIFQWADGGLSNMILDDGGDATMYILLGARAEAGEDVLSNPHSEEEEILFAQIKKRLAASPGWFTKQRDAIKGVTEETTTGVNRLYQLSQKGLLPFPAINVNDSVTKSKFDNKYGCKESLVDGIRRGTDVMMAGKVAVVCGYGDVGKGSAASLSGAGARVKVTEADPICALQAAMDGYEVVLLEDVVSSADIFITTTGNKDVIRIDHMRQMKDMAIVGNIGHFDNEIEVAALRNLKWTNVKPQVDLIEFPKGNRIILLSEGRLLNLGNATGHPSFVMSASFTNQTLAQIELFTKPGQYENKVYILPKHLDEKVARLHLDKLGVKLTQLSEEQAAYIGVKPQGPFKSDHYRY.

Substrate-binding residues include T57, D132, and E192. 193-195 (TTT) contributes to the NAD(+) binding site. K222 and D226 together coordinate substrate. NAD(+) is bound by residues N227, 256-261 (GYGDVG), E279, N314, 335-337 (IGH), and N380.

This sequence belongs to the adenosylhomocysteinase family. It depends on NAD(+) as a cofactor.

Its subcellular location is the cytoplasm. It catalyses the reaction S-adenosyl-L-homocysteine + H2O = L-homocysteine + adenosine. Its pathway is amino-acid biosynthesis; L-homocysteine biosynthesis; L-homocysteine from S-adenosyl-L-homocysteine: step 1/1. Functionally, may play a key role in the regulation of the intracellular concentration of adenosylhomocysteine. The sequence is that of Adenosylhomocysteinase from Rhizobium etli (strain ATCC 51251 / DSM 11541 / JCM 21823 / NBRC 15573 / CFN 42).